A 390-amino-acid polypeptide reads, in one-letter code: GLH-binding kinase 1 (390 aa).

Positions tyrosine 38–valine 338 constitute a Protein kinase domain. Residues leucine 44–valine 52 and lysine 67 contribute to the ATP site. Aspartate 164 acts as the Proton acceptor in catalysis. Serine 198 carries the phosphoserine modification. Tyrosine 200 carries the phosphotyrosine modification.

It belongs to the protein kinase superfamily. CMGC Ser/Thr protein kinase family. MAP kinase subfamily. Interacts with glh-1, glh-2 (via C-terminus), glh-3 (via C-terminus) and glh-4 (via C-terminus). Interacts with csn-5; the interaction may prevent glh-1 degradation induced by kgb-1. Interacts with fos-1. The cofactor is Mg(2+). Post-translationally, may be phosphorylated by mek-1 on Ser-198 and/or Tyr-200. Phosphorylation is induced upon Cu(2+) and arsenite-mediated cell stimulation and by fasting. In terms of tissue distribution, expressed in somatic and germline tissues.

It localises to the cytoplasm. The catalysed reaction is L-seryl-[protein] + ATP = O-phospho-L-seryl-[protein] + ADP + H(+). The enzyme catalyses L-threonyl-[protein] + ATP = O-phospho-L-threonyl-[protein] + ADP + H(+). Its activity is regulated as follows. Activated by mek-1 mediated phosphorylation. No differences in basal activation between larvae and adults. Inhibited by phosphatase vhp-1. Its function is as follows. Mitogen-activated protein kinase which is an essential component of the JNK pathway composed of mlk-1, mek-1 and kgb-1. Phosphorylates the transcription factor fos-1 which prevents fos-1 dimerization and promoter binding and results in activation of target genes including F53A9.2/kreg-1 and lys-3/kreg-2. Phosphorylates jun-1 and activates the AP-1 transcription factor which is a heterodimer of jun-1 and fos-1. Phosphorylates glh-1 in vitro which may play a role in controlling glh-1 protein levels in the germline by targeting it for degradation by the proteasome. Required for oogenesis and probably also for spermatogenesis. Involved in the response to environmental stress such as heavy metals, infection and protein folding stress in an age-dependent manner. In larvae, has a protective role which becomes detrimental in adults. May control susceptibility to infection, heavy metal stress and premature lethality by regulating daf-16 cellular localization. Involved in the transcriptional response to bacterial pore-forming toxins and to fasting. Required for fasting-induced longevity. Involved in axon regeneration after injury downstream of tyrosine receptor svh-2. The chain is GLH-binding kinase 1 from Caenorhabditis elegans.